A 319-amino-acid polypeptide reads, in one-letter code: Transcription factor VBP (319 aa).

Composition is skewed to low complexity over residues 1–31 (MPGR…GAVA) and 143–158 (ASAS…STAV). Disordered regions lie at residues 1 to 35 (MPGR…QQPE) and 139 to 186 (EKEP…DPDC). Polar residues predominate over residues 159–180 (YQQSEAASSTESPPQNERNTPS). One can recognise a bZIP domain in the interval 243 to 306 (DEKYWTRRKK…GRCKNIVSKY (64 aa)). The basic motif stretch occupies residues 245–265 (KYWTRRKKNNVAAKRSRDARR). Residues 266–273 (LKENQITI) are leucine-zipper.

It belongs to the bZIP family. PAR subfamily. As to quaternary structure, binds DNA as a homodimer or a heterodimer. Exists as a stable dimer in the absence of DNA. Isoform 1 and isoform 3 are expressed in a variety of somatic tissues, including liver, heart, intestine, stomach and kidney. Both isoforms are also expressed in hepatoma (LMH) cells and in embryonic fibroblast cell lines. Isoform 2 and isoform 4 are expressed in adult heart and intestine.

It localises to the nucleus. In terms of biological role, transcription factor that binds to and transactivates the vitellogenin II (VTG2) promoter. Binds to the palindromic sequence 5'-GTTTACATAAAC-3'. This Gallus gallus (Chicken) protein is Transcription factor VBP (TEF).